Consider the following 255-residue polypeptide: NAD kinase (255 aa).

Aspartate 44 functions as the Proton acceptor in the catalytic mechanism. NAD(+) contacts are provided by residues 44–45 (DG), histidine 49, 114–115 (NE), aspartate 144, alanine 152, 155–160 (SAYNLS), and glutamine 216.

Belongs to the NAD kinase family. It depends on a divalent metal cation as a cofactor.

The protein localises to the cytoplasm. The enzyme catalyses NAD(+) + ATP = ADP + NADP(+) + H(+). Involved in the regulation of the intracellular balance of NAD and NADP, and is a key enzyme in the biosynthesis of NADP. Catalyzes specifically the phosphorylation on 2'-hydroxyl of the adenosine moiety of NAD to yield NADP. The protein is NAD kinase of Rickettsia africae (strain ESF-5).